A 345-amino-acid polypeptide reads, in one-letter code: Ferrochelatase (345 aa).

His-192 and Glu-295 together coordinate Fe cation.

This sequence belongs to the ferrochelatase family.

The protein localises to the cytoplasm. The enzyme catalyses heme b + 2 H(+) = protoporphyrin IX + Fe(2+). It participates in porphyrin-containing compound metabolism; protoheme biosynthesis; protoheme from protoporphyrin-IX: step 1/1. Catalyzes the ferrous insertion into protoporphyrin IX. The polypeptide is Ferrochelatase (Opitutus terrae (strain DSM 11246 / JCM 15787 / PB90-1)).